The following is a 393-amino-acid chain: Formate-dependent phosphoribosylglycinamide formyltransferase (393 aa).

Residues 22-23 (EL) and Glu82 contribute to the N(1)-(5-phospho-beta-D-ribosyl)glycinamide site. Residues Arg114, Lys155, 160–165 (SSGHGQ), 195–198 (EGFI), and Glu203 contribute to the ATP site. The 190-residue stretch at 119–308 (RLAAEELGLK…QFALHARAIL (190 aa)) folds into the ATP-grasp domain. Mg(2+) contacts are provided by Glu267 and Glu279. N(1)-(5-phospho-beta-D-ribosyl)glycinamide-binding positions include Asp286, Lys356, and 363 to 364 (RR).

This sequence belongs to the PurK/PurT family. Homodimer.

The enzyme catalyses N(1)-(5-phospho-beta-D-ribosyl)glycinamide + formate + ATP = N(2)-formyl-N(1)-(5-phospho-beta-D-ribosyl)glycinamide + ADP + phosphate + H(+). It functions in the pathway purine metabolism; IMP biosynthesis via de novo pathway; N(2)-formyl-N(1)-(5-phospho-D-ribosyl)glycinamide from N(1)-(5-phospho-D-ribosyl)glycinamide (formate route): step 1/1. In terms of biological role, involved in the de novo purine biosynthesis. Catalyzes the transfer of formate to 5-phospho-ribosyl-glycinamide (GAR), producing 5-phospho-ribosyl-N-formylglycinamide (FGAR). Formate is provided by PurU via hydrolysis of 10-formyl-tetrahydrofolate. In Actinobacillus pleuropneumoniae serotype 3 (strain JL03), this protein is Formate-dependent phosphoribosylglycinamide formyltransferase.